The following is a 403-amino-acid chain: Poly(rC)-binding protein 4 (403 aa).

KH domains are found at residues threonine 17–glycine 67, proline 101–glycine 154, and threonine 241–glycine 293.

Widely expressed, with highest levels in testis and lowest in heart.

The protein localises to the cytoplasm. Its function is as follows. Single-stranded nucleic acid binding protein that binds preferentially to oligo dC. The polypeptide is Poly(rC)-binding protein 4 (Pcbp4) (Mus musculus (Mouse)).